Consider the following 923-residue polypeptide: Phosphoenolpyruvate carboxylase (923 aa).

Catalysis depends on residues His-149 and Lys-585.

This sequence belongs to the PEPCase type 1 family. The cofactor is Mg(2+).

The enzyme catalyses oxaloacetate + phosphate = phosphoenolpyruvate + hydrogencarbonate. In terms of biological role, forms oxaloacetate, a four-carbon dicarboxylic acid source for the tricarboxylic acid cycle. The protein is Phosphoenolpyruvate carboxylase of Nocardia farcinica (strain IFM 10152).